The chain runs to 315 residues: MKWTEVKVETASEAVEAISNIMMEAGASGVAIEDALDIENFESDLYGEILDKEQFTHIKEGAIVMAYFPETTFLTEILPFMKENILRLPEYGLSIGKNEMTISEVAESDWATAWKKYYHPVRVTRFLTIVPSWEAYHAQDEAEKIITLDPGMAFGTGTHPTTRLTLQALETVLRGGETVLDVGTGSGVLSIASRYLGAKDVYAYDLDEVAVAAAKENMDLNPIAADVHVSANDLLKGIDHSADVIVANILADIIVLMIEDAWRLLKQDGTFIISGIIEDKKAMVLEALTKVGFVVDQLFNQGDWYAIILKKPEEE.

T162, G183, D205, and N248 together coordinate S-adenosyl-L-methionine.

The protein belongs to the methyltransferase superfamily. PrmA family.

The protein localises to the cytoplasm. It catalyses the reaction L-lysyl-[protein] + 3 S-adenosyl-L-methionine = N(6),N(6),N(6)-trimethyl-L-lysyl-[protein] + 3 S-adenosyl-L-homocysteine + 3 H(+). Functionally, methylates ribosomal protein L11. In Enterococcus faecalis (strain ATCC 700802 / V583), this protein is Ribosomal protein L11 methyltransferase.